Here is a 529-residue protein sequence, read N- to C-terminus: CTP synthase (529 aa).

The amidoligase domain stretch occupies residues 1–270; sequence MKYIVVTGGV…ADVVCSYLSL (270 aa). Serine 12 is a binding site for CTP. Serine 12 is a UTP binding site. ATP is bound by residues 13–18 and aspartate 70; that span reads GLGKGI. Residues aspartate 70 and glutamate 145 each contribute to the Mg(2+) site. Residues 152–154, 191–196, and lysine 227 contribute to the CTP site; these read DIE and KTKPTQ. UTP contacts are provided by residues 191–196 and lysine 227; that span reads KTKPTQ. ATP is bound at residue 243–245; it reads KDA. The Glutamine amidotransferase type-1 domain occupies 293-525; that stretch reads VAIVSKYGIE…VEACKKNKSS (233 aa). Glycine 349 is an L-glutamine binding site. The active-site Nucleophile; for glutamine hydrolysis is cysteine 376. L-glutamine contacts are provided by residues 377 to 380, glutamate 400, and arginine 455; that span reads LGFQ. Active-site residues include histidine 498 and glutamate 500.

The protein belongs to the CTP synthase family. Homotetramer.

The catalysed reaction is UTP + L-glutamine + ATP + H2O = CTP + L-glutamate + ADP + phosphate + 2 H(+). The enzyme catalyses L-glutamine + H2O = L-glutamate + NH4(+). It carries out the reaction UTP + NH4(+) + ATP = CTP + ADP + phosphate + 2 H(+). The protein operates within pyrimidine metabolism; CTP biosynthesis via de novo pathway; CTP from UDP: step 2/2. With respect to regulation, allosterically activated by GTP, when glutamine is the substrate; GTP has no effect on the reaction when ammonia is the substrate. The allosteric effector GTP functions by stabilizing the protein conformation that binds the tetrahedral intermediate(s) formed during glutamine hydrolysis. Inhibited by the product CTP, via allosteric rather than competitive inhibition. Its function is as follows. Catalyzes the ATP-dependent amination of UTP to CTP with either L-glutamine or ammonia as the source of nitrogen. Regulates intracellular CTP levels through interactions with the four ribonucleotide triphosphates. This chain is CTP synthase, found in Methanoculleus marisnigri (strain ATCC 35101 / DSM 1498 / JR1).